The sequence spans 187 residues: Biogenesis of lysosome-related organelles complex 1 subunit 5 (187 aa).

The disordered stretch occupies residues 1–26 (MSGGGTETPVGCEAAPGGGSKKRDSL). An N-acetylserine modification is found at Ser-2. A coiled-coil region spans residues 154–186 (NKRAEVDEEHRKAMERLKEQYAEMEKDLAKFST).

The protein belongs to the BLOC1S5 family. In terms of assembly, interacts with BLOC1S4, DTNBP1/BLOC1S7 and PI4K2A. Component of the biogenesis of lysosome-related organelles complex 1 (BLOC-1) composed of BLOC1S1, BLOC1S2, BLOC1S3, BLOC1S4, BLOC1S5, BLOC1S6, DTNBP1/BLOC1S7 and SNAPIN/BLOC1S8. Octamer composed of one copy each BLOC1S1, BLOC1S2, BLOC1S3, BLOC1S4, BLOC1S5, BLOC1S6, DTNBP1/BLOC1S7 and SNAPIN/BLOC1S8. The BLOC-1 complex associates with the AP-3 protein complex and membrane protein cargos. Interacts with BLOC1S6.

Functionally, component of the BLOC-1 complex, a complex that is required for normal biogenesis of lysosome-related organelles (LRO), such as platelet dense granules and melanosomes. In concert with the AP-3 complex, the BLOC-1 complex is required to target membrane protein cargos into vesicles assembled at cell bodies for delivery into neurites and nerve terminals. The BLOC-1 complex, in association with SNARE proteins, is also proposed to be involved in neurite extension. Plays a role in intracellular vesicle trafficking. The polypeptide is Biogenesis of lysosome-related organelles complex 1 subunit 5 (Homo sapiens (Human)).